Here is a 746-residue protein sequence, read N- to C-terminus: tRNA (cytosine(34)-C(5))-methyltransferase (746 aa).

The interval Met-1–Gln-30 is disordered. Positions Arg-18–Gln-30 are enriched in basic and acidic residues. Residues Cys-184–Lys-190, Asp-216, Asp-243, and Asp-270 contribute to the S-adenosyl-L-methionine site. The active-site Nucleophile is Cys-323. Disordered stretches follow at residues Gln-454–Trp-475 and Ser-701–Ser-746. Positions Ala-463–Ser-472 are enriched in basic and acidic residues. Over residues Ala-704–Ala-714 the composition is skewed to acidic residues. The segment covering Ala-731–Ser-746 has biased composition (polar residues).

It belongs to the class I-like SAM-binding methyltransferase superfamily. RsmB/NOP family. TRM4 subfamily. In terms of tissue distribution, ubiquitously expressed during embryonic development. Some enrichment is observed in the proventriculus area of the foregut and in the hindgut.

The protein resides in the nucleus. It localises to the nucleolus. The catalysed reaction is cytidine(34) in tRNA precursor + S-adenosyl-L-methionine = 5-methylcytidine(34) in tRNA precursor + S-adenosyl-L-homocysteine + H(+). Its function is as follows. RNA methyltransferase that methylates tRNAs. Methylates cytosine to 5-methylcytosine (m5C) at position 34 of intron-containing tRNA(Leu)(CAA) precursors. Required for short-term memory. The polypeptide is tRNA (cytosine(34)-C(5))-methyltransferase (Drosophila melanogaster (Fruit fly)).